The sequence spans 351 residues: Photosystem II D2 protein (351 aa).

Residues 39–59 form a helical membrane-spanning segment; it reads CAYLALGGWLTGTTFVTSWYT. H116 contacts chlorophyll a. The chain crosses the membrane as a helical span at residues 123–139; the sequence is GFMLRQFEIARLVGIRP. Residues Q128 and N141 each contribute to the pheophytin a site. The chain crosses the membrane as a helical span at residues 151–164; sequence VFVSVFLMYPLGQS. H196 contacts chlorophyll a. A helical membrane pass occupies residues 206 to 226; that stretch reads GALLCAIHGATVENTLFEDGE. A plastoquinone is bound by residues H213 and F260. Fe cation is bound at residue H213. H267 lines the Fe cation pocket. Residues 277–293 form a helical membrane-spanning segment; that stretch reads GLWMSAIGIVGLALNLR.

Belongs to the reaction center PufL/M/PsbA/D family. PSII is composed of 1 copy each of membrane proteins PsbA, PsbB, PsbC, PsbD, PsbE, PsbF, PsbH, PsbI, PsbJ, PsbK, PsbL, PsbM, PsbT, PsbX, PsbY, PsbZ, Psb30/Ycf12, peripheral proteins PsbO, CyanoQ (PsbQ), PsbU, PsbV and a large number of cofactors. It forms dimeric complexes. The D1/D2 heterodimer binds P680, chlorophylls that are the primary electron donor of PSII, and subsequent electron acceptors. It shares a non-heme iron and each subunit binds pheophytin, quinone, additional chlorophylls, carotenoids and lipids. There is also a Cl(-1) ion associated with D1 and D2, which is required for oxygen evolution. The PSII complex binds additional chlorophylls, carotenoids and specific lipids. serves as cofactor.

Its subcellular location is the cellular thylakoid membrane. It carries out the reaction 2 a plastoquinone + 4 hnu + 2 H2O = 2 a plastoquinol + O2. Functionally, photosystem II (PSII) is a light-driven water:plastoquinone oxidoreductase that uses light energy to abstract electrons from H(2)O, generating O(2) and a proton gradient subsequently used for ATP formation. It consists of a core antenna complex that captures photons, and an electron transfer chain that converts photonic excitation into a charge separation. The D1/D2 (PsbA/PsbD) reaction center heterodimer binds P680, the primary electron donor of PSII as well as several subsequent electron acceptors. D2 is needed for assembly of a stable PSII complex. The sequence is that of Photosystem II D2 protein from Crocosphaera subtropica (strain ATCC 51142 / BH68) (Cyanothece sp. (strain ATCC 51142)).